The chain runs to 381 residues: Diguanylate cyclase DosC (381 aa).

Position 98 (His-98) interacts with heme. A GGDEF domain is found at 325–381 (TPLSVLIIDVDKFKEINDTWGHNTGDEILRKVSFLSQKRLVKSKILGAGSSRKLAVS). Mg(2+) is bound at residue Asp-333. Positions 341 and 350 each coordinate substrate.

Requires heme as cofactor. Mg(2+) is required as a cofactor.

The enzyme catalyses 2 GTP = 3',3'-c-di-GMP + 2 diphosphate. Its pathway is purine metabolism; 3',5'-cyclic di-GMP biosynthesis. Its function is as follows. Globin-coupled heme-based oxygen sensor protein displaying diguanylate cyclase (DGC) activity in response to oxygen availability. Thus, catalyzes the synthesis of cyclic diguanylate (c-di-GMP) via the condensation of 2 GTP molecules. Cyclic-di-GMP is a second messenger which controls cell surface-associated traits in bacteria. The protein is Diguanylate cyclase DosC (dosC) of Shigella flexneri.